The chain runs to 260 residues: Acetylglutamate kinase (260 aa).

Residues 46–47 (GG), arginine 68, and asparagine 160 each bind substrate.

Belongs to the acetylglutamate kinase family. ArgB subfamily.

It is found in the cytoplasm. It catalyses the reaction N-acetyl-L-glutamate + ATP = N-acetyl-L-glutamyl 5-phosphate + ADP. It functions in the pathway amino-acid biosynthesis; L-arginine biosynthesis; N(2)-acetyl-L-ornithine from L-glutamate: step 2/4. Its function is as follows. Catalyzes the ATP-dependent phosphorylation of N-acetyl-L-glutamate. The polypeptide is Acetylglutamate kinase (Shewanella denitrificans (strain OS217 / ATCC BAA-1090 / DSM 15013)).